A 45-amino-acid chain; its full sequence is Large ribosomal subunit protein bL34 (45 aa).

This sequence belongs to the bacterial ribosomal protein bL34 family.

The sequence is that of Large ribosomal subunit protein bL34 from Opitutus terrae (strain DSM 11246 / JCM 15787 / PB90-1).